Here is a 198-residue protein sequence, read N- to C-terminus: Superoxide dismutase [Mn], mitochondrial (198 aa).

His26 contributes to the Mn(2+) binding site. At Tyr34 the chain carries 3'-nitrotyrosine. Lys44 and Lys51 each carry N6-acetyllysine; alternate. N6-succinyllysine; alternate occurs at positions 44 and 51. His74 contacts Mn(2+). Lys90 bears the N6-acetyllysine mark. N6-acetyllysine; alternate occurs at positions 98 and 106. N6-succinyllysine; alternate is present on residues Lys98 and Lys106. The Mn(2+) site is built by Asp159 and His163. Lys178 carries the post-translational modification N6-acetyllysine.

Belongs to the iron/manganese superoxide dismutase family. As to quaternary structure, homotetramer. It depends on Mn(2+) as a cofactor. Post-translationally, nitrated under oxidative stress. Nitration coupled with oxidation inhibits the catalytic activity. In terms of processing, acetylation at Lys-98 decreases enzymatic activity. Deacetylated by SIRT3 upon exposure to ionizing radiations or after long fasting. Polyubiquitinated; leading to proteasomal degradation. Deubiquitinated by USP36 which increases protein stability.

Its subcellular location is the mitochondrion matrix. It catalyses the reaction 2 superoxide + 2 H(+) = H2O2 + O2. Destroys superoxide anion radicals which are normally produced within the cells and which are toxic to biological systems. This is Superoxide dismutase [Mn], mitochondrial (SOD2) from Hylobates lar (Lar gibbon).